Consider the following 362-residue polypeptide: MSKAYKRPLRSGYTTGACAAAVAKGATILLLSGEAPEKVEIPFPDGSRHSFCLSQQDGTGACMGTIKDAGDDPDVTNGALILATASWEGEDGPTCVHLTEIRLCGGDGVGQVSKRGLSIAPGEPAINPVPRQMIEAAVAEALSQHEKRKLTITISVPQGLELAEKTLNHRLGIVNGISILGTTGIVRPISASAWKATISACMDVARSAGLEQMVISTGRTSEKGAQQLLDLPEEAYAMMGDYLQFSLEEAGRKGFSTIHYAGMWAKIIKAALEVPQTHVRNGALEVEAAAQLLKKLGADEELCKKLFAANTAREMLSHLEDEGRDDLVKAVCQYAKKYAEKISEKTVHIYLINHRAEVIHYE.

Belongs to the CbiD family.

It carries out the reaction Co-precorrin-5B + S-adenosyl-L-methionine = Co-precorrin-6A + S-adenosyl-L-homocysteine. Its pathway is cofactor biosynthesis; adenosylcobalamin biosynthesis; cob(II)yrinate a,c-diamide from sirohydrochlorin (anaerobic route): step 6/10. Functionally, catalyzes the methylation of C-1 in cobalt-precorrin-5B to form cobalt-precorrin-6A. This chain is Cobalt-precorrin-5B C(1)-methyltransferase, found in Desulfotalea psychrophila (strain LSv54 / DSM 12343).